Consider the following 235-residue polypeptide: Elongation factor Tu, chloroplastic (235 aa).

The tr-type G domain maps to 1–125 (KNMITGAAQM…SVDSYIPTPI (125 aa)). 47–50 (NKED) contributes to the GTP binding site.

It belongs to the TRAFAC class translation factor GTPase superfamily. Classic translation factor GTPase family. EF-Tu/EF-1A subfamily.

Its subcellular location is the plastid. The protein resides in the chloroplast. It catalyses the reaction GTP + H2O = GDP + phosphate + H(+). Functionally, GTP hydrolase that promotes the GTP-dependent binding of aminoacyl-tRNA to the A-site of ribosomes during protein biosynthesis. The protein is Elongation factor Tu, chloroplastic (tufA) of Costaria costata (Five-ribbed kelp).